The chain runs to 561 residues: Mercuric reductase (561 aa).

Residues 1-65 (MTTLKITGMT…AVAGLGYEAT (65 aa)) enclose the HMA domain. A metal cation is bound by residues Cys11 and Cys14. Positions 110, 130, and 135 each coordinate FAD. The cysteines at positions 136 and 141 are disulfide-linked. 4 residues coordinate FAD: Lys145, Ala211, Asp403, and Val411. Hg(2+) contacts are provided by Cys558 and Cys559.

This sequence belongs to the class-I pyridine nucleotide-disulfide oxidoreductase family. In terms of assembly, homodimer. It depends on FAD as a cofactor.

The catalysed reaction is Hg + NADP(+) + H(+) = Hg(2+) + NADPH. Its function is as follows. Resistance to Hg(2+) in bacteria appears to be governed by a specialized system which includes mercuric reductase. MerA protein is responsible for volatilizing mercury as Hg(0). The protein is Mercuric reductase (merA) of Acinetobacter calcoaceticus.